The chain runs to 427 residues: 3-phosphoshikimate 1-carboxyvinyltransferase (427 aa).

Residues Lys-23, Ser-24, and Arg-28 each coordinate 3-phosphoshikimate. Lys-23 serves as a coordination point for phosphoenolpyruvate. The phosphoenolpyruvate site is built by Gly-97 and Arg-125. Residues Ser-169, Ser-170, Gln-171, Ser-197, Asp-313, Asn-336, and Lys-340 each coordinate 3-phosphoshikimate. Gln-171 lines the phosphoenolpyruvate pocket. The Proton acceptor role is filled by Asp-313. Arg-344, Arg-386, and Lys-411 together coordinate phosphoenolpyruvate.

This sequence belongs to the EPSP synthase family. As to quaternary structure, monomer.

The protein localises to the cytoplasm. It carries out the reaction 3-phosphoshikimate + phosphoenolpyruvate = 5-O-(1-carboxyvinyl)-3-phosphoshikimate + phosphate. Its pathway is metabolic intermediate biosynthesis; chorismate biosynthesis; chorismate from D-erythrose 4-phosphate and phosphoenolpyruvate: step 6/7. Catalyzes the transfer of the enolpyruvyl moiety of phosphoenolpyruvate (PEP) to the 5-hydroxyl of shikimate-3-phosphate (S3P) to produce enolpyruvyl shikimate-3-phosphate and inorganic phosphate. The sequence is that of 3-phosphoshikimate 1-carboxyvinyltransferase from Yersinia ruckeri.